The primary structure comprises 184 residues: MSSNSINAEARAELAELIKELAVVHGEVTLSSGKKADYYIDVRRATLHARASRLIGQLLREATADWDYDAVGGLTLGADPVATAIMHADGRDINAFVVRKEAKKHGMQRRIEGPDLTGKKVLVVEDTTTTGNSPLTAVAALREAGIEVVGVATVVDRATGADEVIAAEGLPYRSLLGLSDLGLN.

Residues arginine 99, lysine 100, lysine 103, histidine 105, and 125–133 (EDTTTTGNS) each bind 5-phospho-alpha-D-ribose 1-diphosphate. Positions 129 and 157 each coordinate orotate.

This sequence belongs to the purine/pyrimidine phosphoribosyltransferase family. PyrE subfamily. As to quaternary structure, homodimer. Mg(2+) is required as a cofactor.

The enzyme catalyses orotidine 5'-phosphate + diphosphate = orotate + 5-phospho-alpha-D-ribose 1-diphosphate. It functions in the pathway pyrimidine metabolism; UMP biosynthesis via de novo pathway; UMP from orotate: step 1/2. In terms of biological role, catalyzes the transfer of a ribosyl phosphate group from 5-phosphoribose 1-diphosphate to orotate, leading to the formation of orotidine monophosphate (OMP). In Corynebacterium glutamicum (strain ATCC 13032 / DSM 20300 / JCM 1318 / BCRC 11384 / CCUG 27702 / LMG 3730 / NBRC 12168 / NCIMB 10025 / NRRL B-2784 / 534), this protein is Orotate phosphoribosyltransferase.